We begin with the raw amino-acid sequence, 682 residues long: MCREADLSEALEAGGCDLETVRNIIQGRPVPCDLRTKVWKIALNVSGKGDSLASWDGSLDLQEQPLIHRDCQNLIDRLSVAEERKTALLEDIESVVTFYCKSRNVKYQEDASWIHLLNPLVGLQLPRSDLYNCFYAIMNKYIPRDCNRKGKPFHLFRLLLQYHEPELCSFLDTKKITPDLYALNWFGSLFAFHCSVEVTQAIWDNYLQQADPFFMYFLMLIMLVNSKETVLGQDMDDKEELIKCLENTPSSLEVEDIEDLFSLAQYYYSKTPASFRKDHQSLFGSSLIAFKDDTDLSQALCLAVSVSEILQANQQQGDGVRFFVVDCRPAEQYNSGHLSTAFHLDSDLMLQNPGEFALSVKSLLEAQKQSIESGSIAGGEHLCFMGSGRDEEDMYINMVLAHFLQKNKEYISIAKGGFMALQQHLADFNMENGYGHWIVSTSGSHSSISMYADGDSAVAADDGKGMKSLVNKMTVAFKTKSVNVKDKVISFIENTATPVDRITFNIPWPERASLERHVSSSDRVGKPYRGVKPVFSIGDEEEYDTDEVDSSSMSDDDRKEIVNVQTWINKPDVKHHFPCDEVKDNGHRFPSHLLVTATHMYCLREILSKKGFAYIQSRQALSTVVKITSKKKHPELITFKYGSSNASGVEISAVERYLIPNAGDATKAIKQQIMKVLDALES.

Residues 29-210 (PVPCDLRTKV…AIWDNYLQQA (182 aa)) form the Rab-GAP TBC domain. The 109-residue stretch at 318–426 (DGVRFFVVDC…GFMALQQHLA (109 aa)) folds into the Rhodanese domain.

The protein localises to the golgi apparatus. It is found in the trans-Golgi network. The protein resides in the cytoplasmic vesicle. In terms of biological role, putative Rab GTPase-activating protein which plays a role in vesicular trafficking. Involved in endosome-to-Golgi trafficking. Acts as a bridging protein by binding simultaneously to golgins, located at the trans-Golgi, and to the WASH complex, located on endosome-derived vesicles. Plays a role in brain development. May act as a general inhibitor of innate immunity signaling. The protein is TBC1 domain family member 23 (tbc1d23) of Xenopus laevis (African clawed frog).